A 604-amino-acid polypeptide reads, in one-letter code: Aspartate--tRNA(Asp/Asn) ligase (604 aa).

Glu174 is a binding site for L-aspartate. Residues 198 to 201 (QLYK) form an aspartate region. Arg220 lines the L-aspartate pocket. Residues 220–222 (RDE) and Gln229 each bind ATP. His460 serves as a coordination point for L-aspartate. Glu494 is a binding site for ATP. Arg501 provides a ligand contact to L-aspartate. Position 546–549 (546–549 (GLDR)) interacts with ATP.

Belongs to the class-II aminoacyl-tRNA synthetase family. Type 1 subfamily. Homodimer.

It is found in the cytoplasm. It carries out the reaction tRNA(Asx) + L-aspartate + ATP = L-aspartyl-tRNA(Asx) + AMP + diphosphate. Aspartyl-tRNA synthetase with relaxed tRNA specificity since it is able to aspartylate not only its cognate tRNA(Asp) but also tRNA(Asn). Reaction proceeds in two steps: L-aspartate is first activated by ATP to form Asp-AMP and then transferred to the acceptor end of tRNA(Asp/Asn). The sequence is that of Aspartate--tRNA(Asp/Asn) ligase from Paracidovorax citrulli (strain AAC00-1) (Acidovorax citrulli).